We begin with the raw amino-acid sequence, 290 residues long: tRNA-cytidine(32) 2-sulfurtransferase (290 aa).

Positions 36 to 41 (SGGKDS) match the PP-loop motif motif. [4Fe-4S] cluster contacts are provided by Cys111, Cys114, and Cys202. Positions 259–290 (DPWLDAEDEEAEDCGEPAGDGVVSLGGARGGR) are disordered. Acidic residues predominate over residues 262 to 273 (LDAEDEEAEDCG).

This sequence belongs to the TtcA family. Homodimer. Requires Mg(2+) as cofactor. It depends on [4Fe-4S] cluster as a cofactor.

The protein localises to the cytoplasm. It carries out the reaction cytidine(32) in tRNA + S-sulfanyl-L-cysteinyl-[cysteine desulfurase] + AH2 + ATP = 2-thiocytidine(32) in tRNA + L-cysteinyl-[cysteine desulfurase] + A + AMP + diphosphate + H(+). The protein operates within tRNA modification. In terms of biological role, catalyzes the ATP-dependent 2-thiolation of cytidine in position 32 of tRNA, to form 2-thiocytidine (s(2)C32). The sulfur atoms are provided by the cysteine/cysteine desulfurase (IscS) system. In Anaeromyxobacter dehalogenans (strain 2CP-C), this protein is tRNA-cytidine(32) 2-sulfurtransferase.